The sequence spans 105 residues: Thioredoxin (105 aa).

The Thioredoxin domain maps to 1–105 (MVNNVTDSSF…SLLDWINKSI (105 aa)). A disulfide bridge connects residues Cys-30 and Cys-33.

This sequence belongs to the thioredoxin family.

Its function is as follows. Component of the thioredoxin-thioredoxin reductase system. Participates in various redox reactions through the reversible oxidation of its active center dithiol to a disulfide and catalyzes dithiol-disulfide exchange reactions. The sequence is that of Thioredoxin (trxA) from Rickettsia prowazekii (strain Madrid E).